The sequence spans 297 residues: MNVQTMILTLQEYWSKQNCILLQAYDTEKGAGTMSPYTMLRTIGPEPWNVAYVEPSRRPADGRYGENPNRLYQHHQFQVIMKPSPTNIQELYLDSLRALGINPLEHDIRFVEDNWENPSLGCAGLGWEVWLDGMEITQFTYFQQVGGLEANPVSAEITYGLERLASYIQDKENVFDLEWVEGFTYGDIFTQPEYEHSKYTFEVSDSAMLFELFSTYEKEADRALEENLVFPAYDYVLKCSHTFNLLDARGAISVTERTGYIGRVRNLARKCAKKYYEEREKLGFPMLKNKEADHEQA.

It belongs to the class-II aminoacyl-tRNA synthetase family. In terms of assembly, tetramer of two alpha and two beta subunits.

It localises to the cytoplasm. It carries out the reaction tRNA(Gly) + glycine + ATP = glycyl-tRNA(Gly) + AMP + diphosphate. This is Glycine--tRNA ligase alpha subunit (glyQ) from Halalkalibacterium halodurans (strain ATCC BAA-125 / DSM 18197 / FERM 7344 / JCM 9153 / C-125) (Bacillus halodurans).